The primary structure comprises 223 residues: RNA-free ribonuclease P (223 aa).

Belongs to the HARP family.

The catalysed reaction is Endonucleolytic cleavage of RNA, removing 5'-extranucleotides from tRNA precursor.. Its function is as follows. RNA-free RNase P that catalyzes the removal of the 5'-leader sequence from pre-tRNA to produce the mature 5'-terminus. The protein is RNA-free ribonuclease P of Methanococcus maripaludis (strain C6 / ATCC BAA-1332).